A 205-amino-acid chain; its full sequence is Holliday junction branch migration complex subunit RuvA (205 aa).

Residues 1 to 64 (MIGRLRGTLA…EDAHLLYGFA (64 aa)) are domain I. Residues 65–143 (EKRERELFRE…AWETSPAMFT (79 aa)) form a domain II region. The segment at 144-154 (LVSDGPLPVAS) is flexible linker. The segment at 154 to 205 (SESSAEADAVSALVSLGYKPQEASKAIAAIKDKAGLSSEELIRRSLKGMIAK) is domain III.

It belongs to the RuvA family. As to quaternary structure, homotetramer. Forms an RuvA(8)-RuvB(12)-Holliday junction (HJ) complex. HJ DNA is sandwiched between 2 RuvA tetramers; dsDNA enters through RuvA and exits via RuvB. An RuvB hexamer assembles on each DNA strand where it exits the tetramer. Each RuvB hexamer is contacted by two RuvA subunits (via domain III) on 2 adjacent RuvB subunits; this complex drives branch migration. In the full resolvosome a probable DNA-RuvA(4)-RuvB(12)-RuvC(2) complex forms which resolves the HJ.

The protein localises to the cytoplasm. Functionally, the RuvA-RuvB-RuvC complex processes Holliday junction (HJ) DNA during genetic recombination and DNA repair, while the RuvA-RuvB complex plays an important role in the rescue of blocked DNA replication forks via replication fork reversal (RFR). RuvA specifically binds to HJ cruciform DNA, conferring on it an open structure. The RuvB hexamer acts as an ATP-dependent pump, pulling dsDNA into and through the RuvAB complex. HJ branch migration allows RuvC to scan DNA until it finds its consensus sequence, where it cleaves and resolves the cruciform DNA. The polypeptide is Holliday junction branch migration complex subunit RuvA (Pseudomonas entomophila (strain L48)).